The following is a 384-amino-acid chain: DNA replication and repair protein RecF (384 aa).

An ATP-binding site is contributed by 30-37 (GENAQGKT).

The protein belongs to the RecF family.

The protein resides in the cytoplasm. In terms of biological role, the RecF protein is involved in DNA metabolism; it is required for DNA replication and normal SOS inducibility. RecF binds preferentially to single-stranded, linear DNA. It also seems to bind ATP. The sequence is that of DNA replication and repair protein RecF from Levilactobacillus brevis (strain ATCC 367 / BCRC 12310 / CIP 105137 / JCM 1170 / LMG 11437 / NCIMB 947 / NCTC 947) (Lactobacillus brevis).